Here is a 340-residue protein sequence, read N- to C-terminus: Guanine nucleotide-binding protein G(I)/G(S)/G(T) subunit beta-1 (340 aa).

WD repeat units lie at residues 53–83 (GHLAKIYAMHWGTDSRLLVSASQDGKLIIWD), 95–125 (LRSSWVMTCAYAPSGNYVACGGLDNICPIYN), 141–170 (GHTGYLSCCRFLDDNQIITSSGDTTCALWD), 182–212 (GHTGDVMSLSLAPDSRCFVSGACDASAKLWD), 224–254 (GHESDINAICFFPNGNAFATGSDDATCRLFD), 268–298 (NIICGITSVAFSKSGRLLLAGYDDFNCNVWD), and 310–340 (GHDNRVSCLGVTDDGMAVATGSWDSFLKIWN).

It belongs to the WD repeat G protein beta family. In terms of assembly, g proteins are composed of 3 units, alpha, beta and gamma.

In terms of biological role, guanine nucleotide-binding proteins (G proteins) are involved as a modulator or transducer in various transmembrane signaling systems. The beta and gamma chains are required for the GTPase activity, for replacement of GDP by GTP, and for G protein-effector interaction. In Xenopus laevis (African clawed frog), this protein is Guanine nucleotide-binding protein G(I)/G(S)/G(T) subunit beta-1 (gnb1).